A 412-amino-acid polypeptide reads, in one-letter code: Adenosine receptor A2a (412 aa).

The Extracellular portion of the chain corresponds to 1–7 (MPIMGSS). The helical transmembrane segment at 8-32 (VYITVELAIAVLAILGNVLVCWAVW) threads the bilayer. At 33 to 42 (LNSNLQNVTN) the chain is on the cytoplasmic side. The helical transmembrane segment at 43-66 (YFVVSLAAADIAVGVLAIPFAITI) threads the bilayer. The Extracellular segment spans residues 67-77 (STGFCAACHGC). 3 disulfide bridges follow: Cys-71–Cys-159, Cys-74–Cys-146, and Cys-77–Cys-166. A helical transmembrane segment spans residues 78 to 100 (LFIACFVLVLTQSSIFSLLAIAI). Topologically, residues 101 to 120 (DRYIAIRIPLRYNGLVTGTR) are cytoplasmic. The helical transmembrane segment at 121–143 (AKGIIAICWVLSFAIGLTPMLGW) threads the bilayer. Over 144–173 (NNCGQPKEGKNHSQGCGEGQVACLFEDVVP) the chain is Extracellular. N-linked (GlcNAc...) asparagine glycosylation is present at Asn-154. Glu-169 contacts adenosine. Residues 174–198 (MNYMVYFNFFACVLVPLLLMLGVYL) form a helical membrane-spanning segment. The Cytoplasmic segment spans residues 199–234 (RIFLAARRQLKQMESQPLPGERARSTLQKEVHAAKS). Residues 235–258 (LAIIVGLFALCWLPLHIINCFTFF) form a helical membrane-spanning segment. Asn-253 contacts adenosine. Cys-259 and Cys-262 form a disulfide bridge. Topologically, residues 259 to 266 (CPDCSHAP) are extracellular. A helical membrane pass occupies residues 267-290 (LWLMYLAIVLSHTNSVVNPFIYAY). 2 residues coordinate adenosine: Ser-277 and His-278. The Cytoplasmic portion of the chain corresponds to 291 to 412 (RIREFRQTFR…PLAQDGAGVS (122 aa)). The interval 391–412 (KGVCPEPPGLDDPLAQDGAGVS) is disordered.

The protein belongs to the G-protein coupled receptor 1 family. As to quaternary structure, interacts (via cytoplasmic C-terminal domain) with USP4; the interaction is direct. May interact with DRD4. Interacts with NECAB2. Interacts (via cytoplasmic C-terminal domain) with GAS2L2; interaction enhances receptor-mediated adenylyl cyclase activity. In terms of processing, ubiquitinated. Deubiquitinated by USP4; leading to stabilization and expression at the cell surface.

It is found in the cell membrane. Its function is as follows. Receptor for adenosine. The activity of this receptor is mediated by G proteins which activate adenylyl cyclase. In Homo sapiens (Human), this protein is Adenosine receptor A2a (ADORA2A).